Reading from the N-terminus, the 92-residue chain is YcgL domain-containing protein ASA_2166 (92 aa).

The region spanning 1-85 (MLCAVYKSRK…PPENLLEQHK (85 aa)) is the YcgL domain.

In Aeromonas salmonicida (strain A449), this protein is YcgL domain-containing protein ASA_2166.